We begin with the raw amino-acid sequence, 250 residues long: Probable 2' cyclic ADP-D-ribose synthase TcpB (250 aa).

The disordered stretch occupies residues methionine 1–lysine 46. Over residues alanine 14–serine 23 the composition is skewed to low complexity. Positions lysine 30–arginine 39 are enriched in basic and acidic residues. One can recognise a TIR domain in the interval glutamate 117–isoleucine 250. Glutamate 192 is a catalytic residue.

Homodimer. Interacts with host TIRAP. Interacts with host TLR4, abolishes the interaction of host TIRAP with TLR4.

It is found in the secreted. Its subcellular location is the host cell membrane. It carries out the reaction NAD(+) + H2O = ADP-D-ribose + nicotinamide + H(+). The catalysed reaction is NAD(+) = 2'cADPR + nicotinamide + H(+). Its function is as follows. Virulence factor that interferes with host Toll-like receptor 2 (TLR2) signaling, resulting in the reduction of dendritic cell maturation, inhibition of pro-inflammatory cytokine secretion and impaired NF-kappa-B activation in macrophages. Also acts on host TLR4. Binds host lipids. Has NAD(+) hydrolase (NADase) activity, catalyzes cleavage of NAD(+) into ADP-D-ribose (ADPR) and nicotinamide, also generates a cyclization variant of cyclic ADPR (cADPR), termed v-cADPR (probably 2'cADPR). The protein is Probable 2' cyclic ADP-D-ribose synthase TcpB of Brucella abortus (strain 2308).